The following is a 487-amino-acid chain: 3-octaprenyl-4-hydroxybenzoate carboxy-lyase (487 aa).

Asn172 serves as a coordination point for Mn(2+). Residues 175–177, 189–191, and 194–195 contribute to the prenylated FMN site; these read IYR, RWL, and RG. Residue Glu238 coordinates Mn(2+). Residue Asp287 is the Proton donor of the active site.

Belongs to the UbiD family. Homohexamer. Prenylated FMN is required as a cofactor. Mn(2+) serves as cofactor.

It localises to the cell membrane. It catalyses the reaction a 4-hydroxy-3-(all-trans-polyprenyl)benzoate + H(+) = a 2-(all-trans-polyprenyl)phenol + CO2. The protein operates within cofactor biosynthesis; ubiquinone biosynthesis. Its function is as follows. Catalyzes the decarboxylation of 3-octaprenyl-4-hydroxy benzoate to 2-octaprenylphenol, an intermediate step in ubiquinone biosynthesis. In Nitrosomonas europaea (strain ATCC 19718 / CIP 103999 / KCTC 2705 / NBRC 14298), this protein is 3-octaprenyl-4-hydroxybenzoate carboxy-lyase.